A 168-amino-acid chain; its full sequence is Shikimate kinase (168 aa).

Residue 10–15 participates in ATP binding; that stretch reads CSGKST. Residue Ser-14 coordinates Mg(2+). Asp-32, Arg-56, and Gly-78 together coordinate substrate. Arg-116 serves as a coordination point for ATP. Arg-133 provides a ligand contact to substrate.

This sequence belongs to the shikimate kinase family. Monomer. It depends on Mg(2+) as a cofactor.

It localises to the cytoplasm. It carries out the reaction shikimate + ATP = 3-phosphoshikimate + ADP + H(+). It functions in the pathway metabolic intermediate biosynthesis; chorismate biosynthesis; chorismate from D-erythrose 4-phosphate and phosphoenolpyruvate: step 5/7. In terms of biological role, catalyzes the specific phosphorylation of the 3-hydroxyl group of shikimic acid using ATP as a cosubstrate. This chain is Shikimate kinase, found in Aquifex aeolicus (strain VF5).